The chain runs to 143 residues: Subtelomeric hrmA-associated cluster protein cgnA (143 aa).

G-Q-I/R/S repeat units lie at residues 11–13 (GQI), 14–16 (GPI), 17–19 (GQR), 20–22 (GQS), 23–25 (GQR), 26–28 (GQS), 29–31 (GQR), 32–34 (GQS), 35–37 (GQI), 38–40 (GQS), 41–43 (GQS), 44–46 (GQS), 47–49 (GQI), 50–52 (GQI), 53–55 (GQI), 56–58 (GQI), 59–61 (GQI), 62–64 (GQI), 65–67 (GQI), 68–70 (GQI), 71–73 (GQI), 74–76 (GQI), 77–79 (GQI), 80–82 (GQI), 83–85 (GQI), 86–88 (GQI), 89–91 (GQI), 92–94 (GQI), and 95–97 (GQA). A Collagen-like domain is found at 11-68 (GQIGPIGQRGQSGQRGQSGQRGQSGQIGQSGQSGQSGQIGQIGQIGQIGQIGQIGQIG). The 29 X 3 AA approximate tandem repeats of G-Q-I/R/S stretch occupies residues 11–97 (GQIGPIGQRG…IGQIGQIGQA (87 aa)). A disordered region spans residues 16–49 (IGQRGQSGQRGQSGQRGQSGQIGQSGQSGQSGQI).

It is found in the secreted. Its function is as follows. Collagen-like protein; part of the subtelomeric hrmA-associated cluster (HAC) containing genes that alter the hyphal surface (such as reduced total chitin or increased beta-glucan exposure) and perturb inter-hyphal interactions within the developing biofilms, resulting in a loss of vertically aligned polarized growing filaments. Consequently, this hypoxia-typic morphotype (called H-MORPH) with altered biofilm architecture leads to increased hypoxia fitness, increased host inflammation, rapid disease progression, and mortality in a murine model of invasive aspergillosis. CgnA is directly involved in the reduction of total surface chitin and the increase of beta-glucan exposure, and mediates the detachment of the extracellular matrix and especially of its component galactosaminogalactan (GAG). This is Subtelomeric hrmA-associated cluster protein cgnA from Aspergillus fumigatus (strain ATCC MYA-4609 / CBS 101355 / FGSC A1100 / Af293) (Neosartorya fumigata).